A 789-amino-acid chain; its full sequence is Ribonucleoside-diphosphate reductase large subunit (789 aa).

Substrate-binding positions include Thr-207, 222 to 223 (SC), Gly-253, 435 to 439 (NLCTE), and 620 to 624 (PTVSS). An intrachain disulfide couples Cys-223 to Cys-452. The Proton acceptor role is filled by Asn-435. Residue Cys-437 is the Cysteine radical intermediate of the active site. Glu-439 functions as the Proton acceptor in the catalytic mechanism.

The protein belongs to the ribonucleoside diphosphate reductase large chain family. Heterotetramer composed of a homodimer of the large subunit (R1) and a homodimer of the small subunit (R2). Larger multisubunit protein complex are also active, composed of (R1)n(R2)n.

It carries out the reaction a 2'-deoxyribonucleoside 5'-diphosphate + [thioredoxin]-disulfide + H2O = a ribonucleoside 5'-diphosphate + [thioredoxin]-dithiol. Its function is as follows. Ribonucleoside-diphosphate reductase holoenzyme provides the precursors necessary for viral DNA synthesis. Allows virus growth in non-dividing cells, as well as reactivation from latency in infected hosts. Catalyzes the biosynthesis of deoxyribonucleotides from the corresponding ribonucleotides. This is Ribonucleoside-diphosphate reductase large subunit from Equus caballus (Horse).